Consider the following 625-residue polypeptide: Vacuolar-sorting receptor 2 (625 aa).

An N-terminal signal peptide occupies residues 1–19 (MRTTNVWLVVIVWVTVGWS). Over 20–567 (SCTGRFVVEK…INRDARGDFS (548 aa)) the chain is Lumenal. The PA domain occupies 55-167 (QYGGSMSGAV…SLGSAIKTAI (113 aa)). Residues N147, N293, and N433 are each glycosylated (N-linked (GlcNAc...) asparagine). EGF-like domains lie at 415 to 465 (ETNE…THCE) and 468 to 515 (GALR…KECK). 7 disulfides stabilise this stretch: C419/C437, C426/C446, C448/C464, C472/C492, C479/C500, C502/C514, and C544/C557. One can recognise an EGF-like 3; calcium-binding domain in the interval 516 to 558 (DVNECEEKTACQCRDCKCKNTWGSYECSCSGSLLYIREHDICI). Residues 568 to 588 (WGVIWIIIMGLGAAALGAYTV) traverse the membrane as a helical segment. At 589–625 (YKYRIRTYMDSEIRAIMAQYMPLDNNPNTQLSSQLEL) the chain is on the cytoplasmic side. Residues 608 to 611 (YMPL) carry the Tyrosine-based internalization motif motif.

The protein belongs to the VSR (BP-80) family. In terms of tissue distribution, expressed only in flowers.

The protein resides in the membrane. Its subcellular location is the golgi apparatus membrane. It is found in the cytoplasmic vesicle. It localises to the clathrin-coated vesicle membrane. The protein localises to the prevacuolar compartment membrane. In terms of biological role, vacuolar-sorting receptor (VSR) involved in clathrin-coated vesicles sorting from Golgi apparatus to vacuoles. This chain is Vacuolar-sorting receptor 2, found in Arabidopsis thaliana (Mouse-ear cress).